Consider the following 466-residue polypeptide: 55 kDa erythrocyte membrane protein (466 aa).

Residue Thr-2 is modified to N-acetylthreonine. Residues Ser-13 and Ser-19 each carry the phosphoserine modification. A Phosphothreonine modification is found at Thr-49. Phosphoserine occurs at positions 52, 57, and 110. A PDZ domain is found at 71–152 (LIQIEKVTEE…MISLKVIPNQ (82 aa)). The SH3 domain maps to 158-228 (ALQMFMRAQF…PSPELQEWRV (71 aa)). Ser-243 bears the Phosphoserine mark. Residues 268 to 466 (VVSYEEVVRL…PQWVPVSWVY (199 aa)) are interaction with PALS1. One can recognise a Guanylate kinase-like domain in the interval 282 to 451 (RKTLVLIGAS…TLKKLQEAFD (170 aa)).

The protein belongs to the MAGUK family. Heterodimer with PALS1. Interacts with DLG5 and NF2. Interacts (via guanylate kinase-like domain) with WHRN (via third PDZ domain). Palmitoylated.

The protein localises to the cell membrane. It is found in the cell projection. It localises to the stereocilium. Its function is as follows. Essential regulator of neutrophil polarity. Regulates neutrophil polarization by regulating AKT1 phosphorylation through a mechanism that is independent of PIK3CG activity. The chain is 55 kDa erythrocyte membrane protein (MPP1) from Papio anubis (Olive baboon).